The sequence spans 376 residues: Acetylornithine aminotransferase (376 aa).

Residues 96 to 97 (GT) and Phe128 contribute to the pyridoxal 5'-phosphate site. Arg131 is a N(2)-acetyl-L-ornithine binding site. Position 213-216 (213-216 (DEVQ)) interacts with pyridoxal 5'-phosphate. Lys242 bears the N6-(pyridoxal phosphate)lysine mark. Position 270 (Ser270) interacts with N(2)-acetyl-L-ornithine. Thr271 lines the pyridoxal 5'-phosphate pocket.

Belongs to the class-III pyridoxal-phosphate-dependent aminotransferase family. ArgD subfamily. As to quaternary structure, homodimer. Requires pyridoxal 5'-phosphate as cofactor.

It is found in the cytoplasm. It catalyses the reaction N(2)-acetyl-L-ornithine + 2-oxoglutarate = N-acetyl-L-glutamate 5-semialdehyde + L-glutamate. It functions in the pathway amino-acid biosynthesis; L-arginine biosynthesis; N(2)-acetyl-L-ornithine from L-glutamate: step 4/4. The sequence is that of Acetylornithine aminotransferase from Aquifex aeolicus (strain VF5).